The sequence spans 197 residues: Regulator of free ubiquitin chains 1 (197 aa).

Belongs to the RFU1 family.

The protein resides in the endosome. Inhibitor of the DOA4 deubiquitinase involved in the regulation of protein degradation by the proteasome and maintenance of a normal level of free ubiquitin. In Vanderwaltozyma polyspora (strain ATCC 22028 / DSM 70294 / BCRC 21397 / CBS 2163 / NBRC 10782 / NRRL Y-8283 / UCD 57-17) (Kluyveromyces polysporus), this protein is Regulator of free ubiquitin chains 1 (RFU1).